Reading from the N-terminus, the 257-residue chain is ATP synthase subunit a (257 aa).

A propeptide spans M1–T4 (removed in mature form). The next 8 membrane-spanning stretches (helical) occupy residues F27–I47, I58–V78, Y93–I113, Q122–L142, V149–I169, I189–L209, F214–I234, and F236–L256.

The protein belongs to the ATPase A chain family. F-type ATPases have 2 components, CF(1) - the catalytic core - and CF(0) - the membrane proton channel. CF(1) has five subunits: alpha(3), beta(3), gamma(1), delta(1), epsilon(1). CF(0) has three main subunits: a, b and c.

The protein resides in the mitochondrion inner membrane. In terms of biological role, mitochondrial membrane ATP synthase (F(1)F(0) ATP synthase or Complex V) produces ATP from ADP in the presence of a proton gradient across the membrane which is generated by electron transport complexes of the respiratory chain. F-type ATPases consist of two structural domains, F(1) - containing the extramembraneous catalytic core and F(0) - containing the membrane proton channel, linked together by a central stalk and a peripheral stalk. During catalysis, ATP synthesis in the catalytic domain of F(1) is coupled via a rotary mechanism of the central stalk subunits to proton translocation. Key component of the proton channel; it may play a direct role in the translocation of protons across the membrane. This is ATP synthase subunit a (atp6) from Schizosaccharomyces pombe (strain 972 / ATCC 24843) (Fission yeast).